The chain runs to 812 residues: Probable inorganic carbon transporter subunit DabA (812 aa).

Zn(2+)-binding residues include cysteine 338, aspartate 340, histidine 498, and cysteine 513.

Belongs to the inorganic carbon transporter (TC 9.A.2) DabA family. As to quaternary structure, forms a complex with DabB. The cofactor is Zn(2+).

The protein localises to the cell inner membrane. Its function is as follows. Part of an energy-coupled inorganic carbon pump. This is Probable inorganic carbon transporter subunit DabA from Methylobacterium sp. (strain 4-46).